The following is a 1204-amino-acid chain: Cingulin (1204 aa).

The tract at residues 7-357 (MAEPRGPVDH…GVISSGSSKA (351 aa)) is head. Residues 25-48 (EPVSGAEMGTLRRGGRRPAKDARA) form a disordered region. The ZIM motif lies at 48-62 (ASTYGVAVRVQGIAG). Residues 54-67 (AVRVQGIAGQPFVV) form an interaction with TJP1/ZO1 region. Disordered regions lie at residues 68–174 (LNSG…DTAP) and 186–266 (DGQL…FSRA). The span at 93–119 (ALSSDSELPENPYSQVQGFPAPSQSST) shows a compositional bias: polar residues. Residues S95, S96, S98, S135, S137, S140, S155, S165, S214, and S217 each carry the phosphoserine modification. A compositionally biased stretch (basic and acidic residues) spans 207–231 (EQRKRSKSLDSRLPRDTLEERERQS). Over residues 232–245 (TNHWNPSTKYNNHV) the composition is skewed to polar residues. Positions 247 to 261 (SLKQPAQSPSPSPLS) are enriched in low complexity. Phosphoserine is present on residues S258, S276, S338, and S351. Residues 358–1161 (MAGQGELARK…SLEKDSWRKA (804 aa)) are a coiled coil. Residues 379–398 (VKKRQKLEPSRAGLERQLEE) are disordered. Position 579 is an N6-acetyllysine (K579). Residues 1161 to 1182 (ASRSAAESALKHEGLSSDEEFD) are disordered. The tail stretch occupies residues 1162–1204 (SRSAAESALKHEGLSSDEEFDSVYDPSSIASLLTESNLQTSSC). S1176, S1177, and S1183 each carry phosphoserine.

This sequence belongs to the cingulin family. In terms of assembly, homodimer. Interacts with TJP1/ZO1 and SPEF1.

Its subcellular location is the cell junction. The protein resides in the tight junction. In terms of biological role, probably plays a role in the formation and regulation of the tight junction (TJ) paracellular permeability barrier. The sequence is that of Cingulin from Plecturocebus moloch (Dusky titi monkey).